The following is a 213-amino-acid chain: Uracil phosphoribosyltransferase (213 aa).

5-phospho-alpha-D-ribose 1-diphosphate is bound by residues arginine 78, arginine 103, and 130 to 138 (DPMLATGGS). Uracil is bound by residues isoleucine 197 and 202-204 (GDA). Aspartate 203 is a 5-phospho-alpha-D-ribose 1-diphosphate binding site.

This sequence belongs to the UPRTase family. The cofactor is Mg(2+).

The enzyme catalyses UMP + diphosphate = 5-phospho-alpha-D-ribose 1-diphosphate + uracil. The protein operates within pyrimidine metabolism; UMP biosynthesis via salvage pathway; UMP from uracil: step 1/1. Allosterically activated by GTP. In terms of biological role, catalyzes the conversion of uracil and 5-phospho-alpha-D-ribose 1-diphosphate (PRPP) to UMP and diphosphate. This Cutibacterium acnes (strain DSM 16379 / KPA171202) (Propionibacterium acnes) protein is Uracil phosphoribosyltransferase.